The sequence spans 701 residues: Elongation factor G 2 (701 aa).

In terms of domain architecture, tr-type G spans 8 to 291 (ERYRNIGISA…AVIDYLPSPA (284 aa)). Residues 17–24 (AHIDAGKT), 88–92 (DTPGH), and 142–145 (NKMD) each bind GTP.

The protein belongs to the TRAFAC class translation factor GTPase superfamily. Classic translation factor GTPase family. EF-G/EF-2 subfamily.

It is found in the cytoplasm. Its function is as follows. Catalyzes the GTP-dependent ribosomal translocation step during translation elongation. During this step, the ribosome changes from the pre-translocational (PRE) to the post-translocational (POST) state as the newly formed A-site-bound peptidyl-tRNA and P-site-bound deacylated tRNA move to the P and E sites, respectively. Catalyzes the coordinated movement of the two tRNA molecules, the mRNA and conformational changes in the ribosome. The protein is Elongation factor G 2 of Burkholderia lata (strain ATCC 17760 / DSM 23089 / LMG 22485 / NCIMB 9086 / R18194 / 383).